A 320-amino-acid polypeptide reads, in one-letter code: uncharacterized protein (320 aa).

7 consecutive transmembrane segments (helical) span residues Leu107–Tyr127, Val131–Ser151, Leu169–Ile189, Ile200–Ser220, Ile228–Leu248, Ala260–Ser280, and Thr299–Tyr319.

Its subcellular location is the cell membrane. This is an uncharacterized protein from Methanocaldococcus jannaschii (strain ATCC 43067 / DSM 2661 / JAL-1 / JCM 10045 / NBRC 100440) (Methanococcus jannaschii).